The chain runs to 220 residues: Grancalcin (220 aa).

4 consecutive EF-hand domains span residues 51–86 (SPAD…SGIS), 92–127 (FSLE…LNAW), 122–157 (AALN…MGYR), and 158–193 (LSPQ…ALTD). Ca(2+) is bound by residues aspartate 105, aspartate 107, threonine 109, lysine 111, glutamate 116, aspartate 135, aspartate 137, serine 139, threonine 141, and glutamate 146.

Homodimer. Interacts with SRI and LCP1.

The protein resides in the cytoplasm. It localises to the cytoplasmic granule membrane. Its function is as follows. Calcium-binding protein that may play a role in the adhesion of neutrophils to fibronectin. May play a role in the formation of focal adhesions. The chain is Grancalcin (Gca) from Mus musculus (Mouse).